A 500-amino-acid polypeptide reads, in one-letter code: ADP,ATP carrier protein 5 (500 aa).

The next 11 membrane-spanning stretches (helical) occupy residues 21–41, 62–82, 94–114, 149–169, 184–204, 224–244, 287–307, 328–348, 357–377, 381–401, and 469–489; these read IYNYELGKFIPMSALMFCILF, IAGFAKVYCVTPAAALFVIIY, IFYYLTAFFIGFFVLFAFVIY, YIVYYSLAELWPNIFYVLLFW, FYTLFSLFGNSSLILVGFLMM, ITLVQISTILVTIVAVICCLL, LWLLLICSAAFGFAINLVEAV, LYILWTGVAIMVMTIIGNNVM, AVISPVIIMVTGVLFFVLIVF, ILSLFDGAILMSPLALAVSIG, and SISPVLMVVFTFVCLAWIYAV.

This sequence belongs to the ADP/ATP translocase tlc family.

It is found in the cell membrane. Provides the rickettsial cell with host ATP in exchange for rickettsial ADP. This is an obligate exchange system. This energy acquiring activity is an important component of rickettsial parasitism. The sequence is that of ADP,ATP carrier protein 5 (tlcE) from Rickettsia bellii (strain RML369-C).